Here is a 118-residue protein sequence, read N- to C-terminus: Ribonuclease P protein component (118 aa).

This sequence belongs to the RnpA family. Consists of a catalytic RNA component (M1 or rnpB) and a protein subunit.

The catalysed reaction is Endonucleolytic cleavage of RNA, removing 5'-extranucleotides from tRNA precursor.. Functionally, RNaseP catalyzes the removal of the 5'-leader sequence from pre-tRNA to produce the mature 5'-terminus. It can also cleave other RNA substrates such as 4.5S RNA. The protein component plays an auxiliary but essential role in vivo by binding to the 5'-leader sequence and broadening the substrate specificity of the ribozyme. The polypeptide is Ribonuclease P protein component (Petrotoga mobilis (strain DSM 10674 / SJ95)).